A 292-amino-acid polypeptide reads, in one-letter code: 1D-myo-inositol 2-acetamido-2-deoxy-alpha-D-glucopyranoside deacetylase (292 aa).

Residues His11, Asp14, and His146 each coordinate Zn(2+).

Belongs to the MshB deacetylase family. Zn(2+) is required as a cofactor.

It catalyses the reaction 1D-myo-inositol 2-acetamido-2-deoxy-alpha-D-glucopyranoside + H2O = 1D-myo-inositol 2-amino-2-deoxy-alpha-D-glucopyranoside + acetate. Its function is as follows. Catalyzes the deacetylation of 1D-myo-inositol 2-acetamido-2-deoxy-alpha-D-glucopyranoside (GlcNAc-Ins) in the mycothiol biosynthesis pathway. The chain is 1D-myo-inositol 2-acetamido-2-deoxy-alpha-D-glucopyranoside deacetylase from Acidothermus cellulolyticus (strain ATCC 43068 / DSM 8971 / 11B).